Consider the following 491-residue polypeptide: ATP-dependent protease ATPase subunit HslU (491 aa).

ATP-binding positions include Ile34, Gly76–Glu81, Asp296, Glu364, and Arg436.

Belongs to the ClpX chaperone family. HslU subfamily. In terms of assembly, a double ring-shaped homohexamer of HslV is capped on each side by a ring-shaped HslU homohexamer. The assembly of the HslU/HslV complex is dependent on binding of ATP.

The protein resides in the cytoplasm. In terms of biological role, ATPase subunit of a proteasome-like degradation complex; this subunit has chaperone activity. The binding of ATP and its subsequent hydrolysis by HslU are essential for unfolding of protein substrates subsequently hydrolyzed by HslV. HslU recognizes the N-terminal part of its protein substrates and unfolds these before they are guided to HslV for hydrolysis. The chain is ATP-dependent protease ATPase subunit HslU from Chlorobaculum tepidum (strain ATCC 49652 / DSM 12025 / NBRC 103806 / TLS) (Chlorobium tepidum).